Here is a 180-residue protein sequence, read N- to C-terminus: Ribosome maturation factor RimM (180 aa).

Positions N99–F179 constitute a PRC barrel domain.

It belongs to the RimM family. In terms of assembly, binds ribosomal protein uS19.

Its subcellular location is the cytoplasm. An accessory protein needed during the final step in the assembly of 30S ribosomal subunit, possibly for assembly of the head region. Essential for efficient processing of 16S rRNA. May be needed both before and after RbfA during the maturation of 16S rRNA. It has affinity for free ribosomal 30S subunits but not for 70S ribosomes. This Buchnera aphidicola subsp. Baizongia pistaciae (strain Bp) protein is Ribosome maturation factor RimM.